Reading from the N-terminus, the 144-residue chain is Large ribosomal subunit protein uL15 (144 aa).

The disordered stretch occupies residues 1-62; it reads MELNNLKPAE…GQMPLQRRLP (62 aa). The span at 21-31 shows a compositional bias: gly residues; it reads RGIGSGLGKTA.

This sequence belongs to the universal ribosomal protein uL15 family. Part of the 50S ribosomal subunit.

Its function is as follows. Binds to the 23S rRNA. The protein is Large ribosomal subunit protein uL15 of Paraburkholderia phymatum (strain DSM 17167 / CIP 108236 / LMG 21445 / STM815) (Burkholderia phymatum).